Here is a 328-residue protein sequence, read N- to C-terminus: Serine protease 27 (328 aa).

The signal sequence occupies residues Met1 to Gly22. Residues Ala23 to Arg37 constitute a propeptide, activation peptide. A Peptidase S1 domain is found at Met38 to Pro280. Cys63 and Cys79 are disulfide-bonded. His78 functions as the Charge relay system in the catalytic mechanism. N-linked (GlcNAc...) asparagine glycosylation occurs at Asn82. The active-site Charge relay system is Asp127. 3 cysteine pairs are disulfide-bonded: Cys161–Cys238, Cys194–Cys217, and Cys228–Cys256. The active-site Charge relay system is Ser232.

This sequence belongs to the peptidase S1 family.

The protein localises to the secreted. In Rattus norvegicus (Rat), this protein is Serine protease 27 (Prss27).